The primary structure comprises 573 residues: MADTLPPTDRSCDISQPLERLSPDEALKAGSEYLRGTIALGLLDRITSAVPGDDIKLMKFHGIYQQDDRDVRDERRRQKLEPAFQFMIRVRLPGGICTTERWLKISELACAHGNETLRMTTRQTFQFHWVLKHNIVPVIRGLHEVLLDTVAACGDDSRGVMATVNPQFPALQAELAALAKTVSDHVIPKTRGYHEIWYGEERIASSEPEEPFYGRTYMPRKFKIGFVIPPNNDIDIYAQDLGYIAIAGKDGKIAGFNIAIGGGMGRTDKVPHTYPRTASVIGFITPDRLISVTEAVMGVQRDYGNRADRSRARFKYTIDDKGLDWIKLAIEDRAGLLEPARPYHFTSNADIYGWVESDDGYHHFTLFVENGRLNRDTLDKIARIAHVHKGHFRLTPNQNLMIANVATADKPKIDALLVGSGLIAFNEHSVLRLNSMACVAFPTCGLAMADSERYLPTLITKIEGILTRYNLQDEPITLRMTGCPNGCSRPFIAEIGLTGRAPGKYNLYLGGGFHGQRLNRLYRENIGEAAILEALDEVLRHYATERLPDEHFGDFTIRAGIIREVTEGRFSND.

Cys438, Cys444, Cys483, and Cys487 together coordinate [4Fe-4S] cluster. Cys487 is a siroheme binding site.

This sequence belongs to the nitrite and sulfite reductase 4Fe-4S domain family. Alpha(8)-beta(8). The alpha component is a flavoprotein, the beta component is a hemoprotein. Requires siroheme as cofactor. The cofactor is [4Fe-4S] cluster.

The enzyme catalyses hydrogen sulfide + 3 NADP(+) + 3 H2O = sulfite + 3 NADPH + 4 H(+). The protein operates within sulfur metabolism; hydrogen sulfide biosynthesis; hydrogen sulfide from sulfite (NADPH route): step 1/1. In terms of biological role, component of the sulfite reductase complex that catalyzes the 6-electron reduction of sulfite to sulfide. This is one of several activities required for the biosynthesis of L-cysteine from sulfate. The chain is Sulfite reductase [NADPH] hemoprotein beta-component from Nitrosomonas eutropha (strain DSM 101675 / C91 / Nm57).